Reading from the N-terminus, the 679-residue chain is UvrABC system protein B (679 aa).

The region spanning 25–412 is the Helicase ATP-binding domain; sequence EGVNQGQRYQ…DGHLAEQVIR (388 aa). 38–45 contributes to the ATP binding site; the sequence is GATGTGKT. Residues 91 to 114 carry the Beta-hairpin motif; it reads YYDYYQPEAYVPVSDTYIAKTSSI. One can recognise a Helicase C-terminal domain in the interval 429–591; that stretch reads QVDDLLAEIR…IVPRPAGKRA (163 aa). The UVR domain occupies 639-674; that stretch reads PELIDQLETKMKEAAKNLNFEEAASLRDRIKKFRQK.

Belongs to the UvrB family. As to quaternary structure, forms a heterotetramer with UvrA during the search for lesions. Interacts with UvrC in an incision complex.

The protein resides in the cytoplasm. The UvrABC repair system catalyzes the recognition and processing of DNA lesions. A damage recognition complex composed of 2 UvrA and 2 UvrB subunits scans DNA for abnormalities. Upon binding of the UvrA(2)B(2) complex to a putative damaged site, the DNA wraps around one UvrB monomer. DNA wrap is dependent on ATP binding by UvrB and probably causes local melting of the DNA helix, facilitating insertion of UvrB beta-hairpin between the DNA strands. Then UvrB probes one DNA strand for the presence of a lesion. If a lesion is found the UvrA subunits dissociate and the UvrB-DNA preincision complex is formed. This complex is subsequently bound by UvrC and the second UvrB is released. If no lesion is found, the DNA wraps around the other UvrB subunit that will check the other stand for damage. The protein is UvrABC system protein B of Prochlorococcus marinus (strain MIT 9313).